The primary structure comprises 234 residues: N-acetyl-alpha-D-glucosaminyl L-malate deacetylase 1 (234 aa).

Residues H12, D15, and H113 each contribute to the Zn(2+) site.

This sequence belongs to the PIGL family. It depends on Zn(2+) as a cofactor.

It carries out the reaction (S)-malyl N-acetyl-alpha-D-glucosaminide + H2O = (S)-malyl alpha-D-glucosaminide + acetate. Its activity is regulated as follows. Inhibited by BSH. In terms of biological role, involved in bacillithiol (BSH) biosynthesis. Catalyzes the second step of the pathway, the deacetylation of N-acetylglucosaminylmalate (GlcNAc-Mal) to glucosamine malate (GlcN-Mal). The chain is N-acetyl-alpha-D-glucosaminyl L-malate deacetylase 1 from Bacillus anthracis.